A 230-amino-acid polypeptide reads, in one-letter code: Ribonuclease 3 (230 aa).

The RNase III domain occupies 5-134; sequence NDTISKVINY…LIGAIYIDGG (130 aa). Glutamate 47 contributes to the Mg(2+) binding site. Aspartate 51 is a catalytic residue. Positions 120 and 123 each coordinate Mg(2+). Glutamate 123 is a catalytic residue. One can recognise a DRBM domain in the interval 159 to 228; it reads DPKTSLQEWT…AELILEKIKK (70 aa).

Belongs to the ribonuclease III family. As to quaternary structure, homodimer. Mg(2+) serves as cofactor.

It is found in the cytoplasm. The enzyme catalyses Endonucleolytic cleavage to 5'-phosphomonoester.. Digests double-stranded RNA. Involved in the processing of primary rRNA transcript to yield the immediate precursors to the large and small rRNAs (23S and 16S). Processes some mRNAs, and tRNAs when they are encoded in the rRNA operon. Processes pre-crRNA and tracrRNA of type II CRISPR loci if present in the organism. In Wolbachia pipientis subsp. Culex pipiens (strain wPip), this protein is Ribonuclease 3.